Here is a 188-residue protein sequence, read N- to C-terminus: MTIKSDKWIRRMAAEHGMIEPFSPELVREANGQKIVSYGTSSYGYDIRCAREFKVFTNINSTVVDPKNFDPKSFVEIESDVCIIPPNSFALARTMEYFRIPRSVLTVCLGKSTYARCGIIVNVTPFEPEWEGHVTLEFSNTTPLPAKIYAGEGCAQVLFFESDEICETSYKDRGGKYQGQEGVTLPKI.

Residues 111–116 (KSTYAR), 135–137 (TLE), Q156, Y170, and Q180 each bind dCTP. E137 (proton donor/acceptor) is an active-site residue.

Belongs to the dCTP deaminase family. In terms of assembly, homotrimer.

The catalysed reaction is dCTP + H2O + H(+) = dUTP + NH4(+). It participates in pyrimidine metabolism; dUMP biosynthesis; dUMP from dCTP (dUTP route): step 1/2. Its function is as follows. Catalyzes the deamination of dCTP to dUTP. In Dechloromonas aromatica (strain RCB), this protein is dCTP deaminase.